Reading from the N-terminus, the 274-residue chain is Protein LIKE COV 3 (274 aa).

The Cytoplasmic segment spans residues 1–60 (METRERDLERLIPMHKSGASPRDVVLSVPPSPLASPIHVAGKEAIYKVIRSWASKKFMTG). The helical transmembrane segment at 61-81 (CVILLPIAVTFYFTWWFIHFV) threads the bilayer. Over 82 to 93 (DGFFSPIYTHLG) the chain is Extracellular. The helical transmembrane segment at 94 to 114 (INMFGLGFVTSITFIFMVGVF) threads the bilayer. The Cytoplasmic portion of the chain corresponds to 115–274 (MSSWLGASVL…VCLSLVLAWT (160 aa)).

The protein belongs to the plant COV1 protein family.

The protein localises to the membrane. The polypeptide is Protein LIKE COV 3 (Arabidopsis thaliana (Mouse-ear cress)).